Reading from the N-terminus, the 400-residue chain is Subtilisin-like protease CPC735_013700 (400 aa).

The signal sequence occupies residues 1-19 (MGFVKILSLSLAATAVADA). A propeptide spanning residues 20 to 116 (ATILSPRYPN…IEPNQIVTIS (97 aa)) is cleaved from the precursor. An Inhibitor I9 domain is found at 36-115 (YIVVMKDGVS…FIEPNQIVTI (80 aa)). The Peptidase S8 domain occupies 126–400 (SWGLPRISVK…RKLLYNNSGK (275 aa)). Active-site charge relay system residues include Asp-161 and His-192. Residue Asn-252 is glycosylated (N-linked (GlcNAc...) asparagine). The active-site Charge relay system is the Ser-346. Asn-396 is a glycosylation site (N-linked (GlcNAc...) asparagine).

This sequence belongs to the peptidase S8 family.

It is found in the secreted. Secreted subtilisin-like serine protease with keratinolytic activity that contributes to pathogenicity. The chain is Subtilisin-like protease CPC735_013700 from Coccidioides posadasii (strain C735) (Valley fever fungus).